A 426-amino-acid chain; its full sequence is Tryptophan synthase beta chain (426 aa).

Lys108 bears the N6-(pyridoxal phosphate)lysine mark.

The protein belongs to the TrpB family. Tetramer of two alpha and two beta chains. Pyridoxal 5'-phosphate serves as cofactor.

The catalysed reaction is (1S,2R)-1-C-(indol-3-yl)glycerol 3-phosphate + L-serine = D-glyceraldehyde 3-phosphate + L-tryptophan + H2O. It participates in amino-acid biosynthesis; L-tryptophan biosynthesis; L-tryptophan from chorismate: step 5/5. The beta subunit is responsible for the synthesis of L-tryptophan from indole and L-serine. This Thermoplasma volcanium (strain ATCC 51530 / DSM 4299 / JCM 9571 / NBRC 15438 / GSS1) protein is Tryptophan synthase beta chain (trpB).